Reading from the N-terminus, the 225-residue chain is MKLFVGLGNPGARYAGNRHNIGYMAVEAIAADHGFGPWRARFQGLTSEGRLGSEQVLLLKPETFMNLSGQSVGEAMRFYKLTPADVIVFHDELDLAPGKLRLKQGGGHAGHNGLRSIHAHVGEAYGRVRLGIGHPGHKDAVAAYVLNDFAKADQDWLADLLRGISDGAEALARGDGAKFQNAVALRMQPPKPEKPKPAAKAPEAQAPEAAPDARSALQKLADRFR.

Tyr-14 is a binding site for tRNA. Residue His-19 is the Proton acceptor of the active site. TRNA contacts are provided by Phe-64, Asn-66, and Asn-112. Residues Ala-184 to Arg-225 form a disordered region. The segment covering Ala-198–Ala-210 has biased composition (low complexity).

This sequence belongs to the PTH family. As to quaternary structure, monomer.

It is found in the cytoplasm. It carries out the reaction an N-acyl-L-alpha-aminoacyl-tRNA + H2O = an N-acyl-L-amino acid + a tRNA + H(+). In terms of biological role, hydrolyzes ribosome-free peptidyl-tRNAs (with 1 or more amino acids incorporated), which drop off the ribosome during protein synthesis, or as a result of ribosome stalling. Catalyzes the release of premature peptidyl moieties from peptidyl-tRNA molecules trapped in stalled 50S ribosomal subunits, and thus maintains levels of free tRNAs and 50S ribosomes. This is Peptidyl-tRNA hydrolase from Cereibacter sphaeroides (strain KD131 / KCTC 12085) (Rhodobacter sphaeroides).